The primary structure comprises 1387 residues: Kinesin-like protein KIF15 (1387 aa).

The interval 1-23 (MAPGCKSELRNVTNSHSNQPSNE) is disordered. Polar residues predominate over residues 10 to 22 (RNVTNSHSNQPSN). Residues 26–363 (AIKVFVRIRP…LNFAQRAKLI (338 aa)) form the Kinesin motor domain. 109 to 116 (GQTGSGKT) contributes to the ATP binding site. A coiled-coil region spans residues 368-1132 (VVNEDTQGNV…LKMRQLEHVM (765 aa)). Residue S568 is modified to Phosphoserine. Residue K1009 is modified to N6-acetyllysine. Phosphoserine is present on residues S1141 and S1169.

The protein belongs to the TRAFAC class myosin-kinesin ATPase superfamily. Kinesin family. KLP2 subfamily. As to quaternary structure, interacts with MKI67 and TPX2. In terms of tissue distribution, expressed in brain (neurons in the external germinal layer of the cerebellum and in ventricular zones) (at protein level). Expressed in spleen and testis.

It is found in the cytoplasm. It localises to the cytoskeleton. The protein resides in the spindle. In terms of biological role, plus-end directed kinesin-like motor enzyme involved in mitotic spindle assembly. The polypeptide is Kinesin-like protein KIF15 (Kif15) (Mus musculus (Mouse)).